A 1742-amino-acid polypeptide reads, in one-letter code: Unconventional myosin-Vc (1742 aa).

Alanine 2 carries the post-translational modification N-acetylalanine. In terms of domain architecture, Myosin N-terminal SH3-like spans 8-62 (TQYNRVWIPDPEEVWKSAEIAKDYRVGDKVLRLLLEDGTELDYSVNPESLPPLRN). Residues 67–753 (VGENDLTALS…QVAYLEKLRL (687 aa)) form the Myosin motor domain. Residue 161–168 (GESGAGKT) coordinates ATP. Positions 632–654 (LYLLMETLNATTPHYVRCIKPND) are actin-binding. IQ domains lie at 756 to 779 (LRQS…FLRE), 780 to 806 (RRAA…VALK), 807 to 829 (EAWA…LYQL), 830 to 854 (IRMA…RKML), and 855 to 884 (EEHK…FVLN). Residues 884-1351 (NIQLTYRVQR…SKTIGKANDV (468 aa)) adopt a coiled-coil conformation. The Dilute domain occupies 1421–1697 (NSTINGIKQV…VRKVQALLNS (277 aa)).

This sequence belongs to the TRAFAC class myosin-kinesin ATPase superfamily. Myosin family. As to expression, expressed chiefly in non-neuronal tissues. Particularly abundant in epithelial and glandular tissues including pancreas, prostate, mammary, stomach, colon and lung.

May be involved in transferrin trafficking. Likely to power actin-based membrane trafficking in many physiologically crucial tissues. This chain is Unconventional myosin-Vc (MYO5C), found in Homo sapiens (Human).